Reading from the N-terminus, the 153-residue chain is Myoglobin (153 aa).

Residues 1-147 enclose the Globin domain; it reads MATACVKSLE…FSDECLDHLK (147 aa). A heme b-binding site is contributed by H94.

The protein belongs to the globin family. As to quaternary structure, homodimer; disulfide-linked. The N-terminus is blocked. Body wall globin is localized in cellular compartments belonging to the hypodermis, the dorsal, ventral and lateral cords, the nerve ring, and body wall muscle.

Its subcellular location is the cytoplasm. Functionally, high oxygen affinity. Probably supplies oxygen needed for muscle activity. This Ascaris suum (Pig roundworm) protein is Myoglobin.